Here is a 202-residue protein sequence, read N- to C-terminus: Putative zinc finger protein ZK686.5 (202 aa).

Residues R43–K63 are disordered. C2H2-type zinc fingers lie at residues T110 to H133, I138 to H160, and V169 to H192.

Its subcellular location is the nucleus. The chain is Putative zinc finger protein ZK686.5 from Caenorhabditis elegans.